The sequence spans 50 residues: MLTKYALVAVIVLCLTVPGFTLLVGDSLCEFTVKERNIEFRAVLAYEPKK.

Residues 5–25 (YALVAVIVLCLTVPGFTLLVG) traverse the membrane as a helical segment.

Belongs to the Hok/Gef family.

The protein resides in the cell inner membrane. In terms of biological role, toxic component of a type I toxin-antitoxin (TA) system. When overexpressed kills cells within minutes; causes collapse of the transmembrane potential and arrest of respiration. Its toxic effect is probably neutralized by an antisense antitoxin Sok RNA. This is Putative protein HokF (hokF) from Escherichia coli O157:H7.